A 378-amino-acid polypeptide reads, in one-letter code: Deoxyguanosinetriphosphate triphosphohydrolase-like protein (378 aa).

The HD domain maps to 62–198 (RLTHTIEVAQ…AAVADDVAYN (137 aa)).

It belongs to the dGTPase family. Type 2 subfamily.

In Paracoccus denitrificans (strain Pd 1222), this protein is Deoxyguanosinetriphosphate triphosphohydrolase-like protein.